The following is an 86-amino-acid chain: Toxin To8 (86 aa).

Positions 1–20 (MTRFVLFISCFFLIGMVVEC) are cleaved as a signal peptide. One can recognise an LCN-type CS-alpha/beta domain in the interval 21 to 83 (KEGYLLGSRG…LWESDTNECG (63 aa)). 4 disulfide bridges follow: C31/C82, C35/C57, C43/C63, and C47/C65. C82 bears the Cysteine amide mark.

It belongs to the long (4 C-C) scorpion toxin superfamily. Sodium channel inhibitor family. Beta subfamily. As to expression, expressed by the venom gland.

It is found in the secreted. Functionally, beta toxins bind voltage-independently at site-4 of sodium channels (Nav) and shift the voltage of activation toward more negative potentials thereby affecting sodium channel activation and promoting spontaneous and repetitive firing. The polypeptide is Toxin To8 (Tityus obscurus (Amazonian scorpion)).